We begin with the raw amino-acid sequence, 439 residues long: ATP-dependent RNA helicase SrmB (439 aa).

Positions 4–32 (SQFEQFDLSPELLKALEKKGYSRPTAIQM) match the Q motif motif. Positions 35–209 (IPAAMEESDV…AERLLNDPVK (175 aa)) constitute a Helicase ATP-binding domain. 48–55 (APTGTGKT) provides a ligand contact to ATP. Residues 157–160 (DEAD) carry the DEAD box motif. A Helicase C-terminal domain is found at 237-387 (KLLARFIETE…GLEPRTKPPK (151 aa)). The span at 381–393 (PRTKPPKDGEVKS) shows a compositional bias: basic and acidic residues. The interval 381 to 439 (PRTKPPKDGEVKSVSKKQKARIKEKREEKKKTEAKKKVKLRHKDTKNIGKRRKPSNSNV) is disordered. Basic residues-rich tracts occupy residues 394–403 (VSKKQKARIK) and 412–439 (TEAK…NSNV).

This sequence belongs to the DEAD box helicase family. SrmB subfamily. Interacts with the 50S ribosomal subunit.

It is found in the cytoplasm. The enzyme catalyses ATP + H2O = ADP + phosphate + H(+). Its function is as follows. DEAD-box RNA helicase involved in the assembly of the 50S ribosomal subunit at low temperature. Exhibits RNA-stimulated ATP hydrolysis and RNA unwinding activity. In Haemophilus influenzae (strain ATCC 51907 / DSM 11121 / KW20 / Rd), this protein is ATP-dependent RNA helicase SrmB.